A 784-amino-acid chain; its full sequence is Cadherin-5 (784 aa).

Residues 1-25 (MQRLMMLLATSGACLGLLAVAAVAA) form the signal peptide. The propeptide occupies 26-47 (AGANPAQRDTHSLLPTHRRQKR). Cadherin domains follow at residues 48–151 (DWIW…WPVF), 152–258 (THRL…FPFF), 259–372 (TQTK…PPIF), 373–477 (QQPF…DNAP), and 478–593 (EFAK…MAAQ). At 48–599 (DWIWNQMHID…MAAQVGVSIQ (552 aa)) the chain is on the extracellular side. Residues Glu-58 and Glu-59 each contribute to the Ca(2+) site. An N-linked (GlcNAc...) (complex) asparagine glycan is attached at Asn-61. Residues Asp-109 and Glu-111 each coordinate Ca(2+). Asn-112 carries N-linked (GlcNAc...) (complex) asparagine glycosylation. Ca(2+)-binding residues include Asp-143, Val-144, Asn-145, Asp-146, and Asn-147. An N-linked (GlcNAc...) asparagine glycan is attached at Asn-157. Positions 177, 179, 186, and 231 each coordinate Ca(2+). Asn-362 carries N-linked (GlcNAc...) asparagine glycosylation. Residue Asn-442 is glycosylated (N-linked (GlcNAc...) (complex) asparagine). N-linked (GlcNAc...) asparagine glycans are attached at residues Asn-523 and Asn-535. Residues 600 to 620 (AVVAILLCILTITVITLLIFL) traverse the membrane as a helical segment. The interval 621 to 660 (RRRLRKQARAHGKSVPEIHEQLVTYDEEGGGEMDTTSYDV) is required for interaction with PALS1. The Cytoplasmic portion of the chain corresponds to 621 to 784 (RRRLRKQARA…GSDPREELLY (164 aa)).

Part of a complex composed of AMOTL2, MAGI1 and CDH5, within the complex AMOTL2 acts as a scaffold protein for the interaction of MAGI1 with CDH5. The complex is required for coupling actin fibers to cell junctions in endothelial cells. Within the complex AMOTL2 (via its N-terminus) interacts with CDH5. Interacts (via cadherin 5 domain) with PTPRB. Interacts with TRPC4. Interacts with KRIT1. Interacts with PARD3. Interacts with RTN4 (isoform B). Interacts with PALS1; the interaction promotes PALS1 localization to cell junctions and is required for CDH5-mediated vascular lumen formation and endothelial cell. Interacts with CTNND1/p120-catenin; the interaction controls CADH5 endocytosis. Post-translationally, phosphorylated on tyrosine residues by KDR/VEGFR-2. Dephosphorylated by PTPRB. In terms of processing, O-glycosylated. As to expression, expressed in endothelial cells (at protein level). Expressed in the brain.

It localises to the cell junction. The protein localises to the adherens junction. Its subcellular location is the cell membrane. It is found in the cytoplasm. Cadherins are calcium-dependent cell adhesion proteins. They preferentially interact with themselves in a homophilic manner in connecting cells; cadherins may thus contribute to the sorting of heterogeneous cell types. This cadherin may play a important role in endothelial cell biology through control of the cohesion and organization of the intercellular junctions. It associates with alpha-catenin forming a link to the cytoskeleton. Plays a role in coupling actin fibers to cell junctions in endothelial cells, via acting as a cell junctional complex anchor for AMOTL2 and MAGI1. Acts in concert with KRIT1 and PALS1 to establish and maintain correct endothelial cell polarity and vascular lumen. These effects are mediated by recruitment and activation of the Par polarity complex and RAP1B. Required for activation of PRKCZ and for the localization of phosphorylated PRKCZ, PARD3, TIAM1 and RAP1B to the cell junction. Associates with CTNND1/p120-catenin to control CADH5 endocytosis. The protein is Cadherin-5 of Homo sapiens (Human).